The chain runs to 133 residues: Salivary cystatin-L2 (133 aa).

Positions 1–18 (MTSSLALVLLLGGAAVCA) are cleaved as a signal peptide. Residues 34-118 (DDPKYLELAH…RTCTAVIYEN (85 aa)) enclose the Cystatin domain.

It belongs to the cystatin family. As to expression, salivary gland, midgut and other tissues.

It localises to the secreted. Inhibitor of cysteine proteinases. Inhibits host cathepsin L (CTSL) and S (CTSS). Modulates production of various cytokines and chemokines in lipopolysaccharide (LPS)-stimulated mouse dendritic cell. Suppresses maturation of mouse bone-marrow-derived dendritic cells (BMDCs). In terms of biological role, (Microbial infection) Modulates Borrelia miyamotoi-stimulated immune responses in mice by suppressing activities of host dendritic and T-cells. This is Salivary cystatin-L2 from Ixodes persulcatus (Taiga tick).